The primary structure comprises 189 residues: CDP-archaeol synthase (189 aa).

5 helical membrane passes run V6–A26, G71–V91, I96–L116, G125–A145, and V162–L184.

The protein belongs to the CDP-archaeol synthase family. Requires Mg(2+) as cofactor.

Its subcellular location is the cell membrane. The enzyme catalyses 2,3-bis-O-(geranylgeranyl)-sn-glycerol 1-phosphate + CTP + H(+) = CDP-2,3-bis-O-(geranylgeranyl)-sn-glycerol + diphosphate. It functions in the pathway membrane lipid metabolism; glycerophospholipid metabolism. Functionally, catalyzes the formation of CDP-2,3-bis-(O-geranylgeranyl)-sn-glycerol (CDP-archaeol) from 2,3-bis-(O-geranylgeranyl)-sn-glycerol 1-phosphate (DGGGP) and CTP. This reaction is the third ether-bond-formation step in the biosynthesis of archaeal membrane lipids. This chain is CDP-archaeol synthase, found in Natronomonas pharaonis (strain ATCC 35678 / DSM 2160 / CIP 103997 / JCM 8858 / NBRC 14720 / NCIMB 2260 / Gabara) (Halobacterium pharaonis).